Here is a 136-residue protein sequence, read N- to C-terminus: Large-conductance mechanosensitive channel (136 aa).

3 consecutive transmembrane segments (helical) span residues 15-35, 38-58, and 80-100; these read IDLA…NSIV, IFMP…MFIQ, and GHFI…FFFV.

The protein belongs to the MscL family. Homopentamer.

The protein localises to the cell inner membrane. Channel that opens in response to stretch forces in the membrane lipid bilayer. May participate in the regulation of osmotic pressure changes within the cell. The chain is Large-conductance mechanosensitive channel from Bartonella tribocorum (strain CIP 105476 / IBS 506).